The sequence spans 365 residues: Cytoplasmic tRNA 2-thiolation protein 1 (365 aa).

It belongs to the TtcA family. CTU1/NCS6/ATPBD3 subfamily.

It is found in the cytoplasm. It participates in tRNA modification; 5-methoxycarbonylmethyl-2-thiouridine-tRNA biosynthesis. Its function is as follows. Plays a central role in 2-thiolation of mcm(5)S(2)U at tRNA wobble positions of tRNA(Lys), tRNA(Glu) and tRNA(Gln). Directly binds tRNAs and probably acts by catalyzing adenylation of tRNAs, an intermediate required for 2-thiolation. It is unclear whether it acts as a sulfurtransferase that transfers sulfur from thiocarboxylated URM1 onto the uridine of tRNAs at wobble position. Prior mcm(5) tRNA modification by the elongator complex is required for 2-thiolation. May also be involved in protein urmylation. The sequence is that of Cytoplasmic tRNA 2-thiolation protein 1 from Yarrowia lipolytica (strain CLIB 122 / E 150) (Yeast).